Here is a 70-residue protein sequence, read N- to C-terminus: Large ribosomal subunit protein bL31 (70 aa).

Residues cysteine 16, cysteine 18, cysteine 37, and cysteine 40 each coordinate Zn(2+).

It belongs to the bacterial ribosomal protein bL31 family. Type A subfamily. In terms of assembly, part of the 50S ribosomal subunit. The cofactor is Zn(2+).

Its function is as follows. Binds the 23S rRNA. This chain is Large ribosomal subunit protein bL31, found in Glaesserella parasuis serovar 5 (strain SH0165) (Haemophilus parasuis).